Here is a 277-residue protein sequence, read N- to C-terminus: 4-hydroxybenzoate octaprenyltransferase (277 aa).

8 consecutive transmembrane segments (helical) span residues 24–44 (FAAA…LGVI), 81–101 (VEAK…DLSL), 102–122 (NQYA…YPFM), 129–149 (PQVV…GAVI), 152–172 (LPLT…AYDT), 201–221 (IIAL…WLSE), 224–244 (IGYF…CWLT), and 255–275 (AFLN…VGIY).

This sequence belongs to the UbiA prenyltransferase family. Mg(2+) is required as a cofactor.

It is found in the cell inner membrane. It catalyses the reaction all-trans-octaprenyl diphosphate + 4-hydroxybenzoate = 4-hydroxy-3-(all-trans-octaprenyl)benzoate + diphosphate. It participates in cofactor biosynthesis; ubiquinone biosynthesis. Functionally, catalyzes the prenylation of para-hydroxybenzoate (PHB) with an all-trans polyprenyl group. Mediates the second step in the final reaction sequence of ubiquinone-8 (UQ-8) biosynthesis, which is the condensation of the polyisoprenoid side chain with PHB, generating the first membrane-bound Q intermediate 3-octaprenyl-4-hydroxybenzoate. This is 4-hydroxybenzoate octaprenyltransferase from Haemophilus ducreyi (strain 35000HP / ATCC 700724).